The chain runs to 41 residues: Phospholipase A2 homolog nigroviriditoxin acidic subunit A (41 aa).

Belongs to the phospholipase A2 family. Group II subfamily. D49 sub-subfamily. As to quaternary structure, nigroviriditoxin is a heterodimer of an acidic subunit A and a basic subunit B. As to expression, expressed by the venom gland.

It is found in the secreted. Its function is as follows. Heterodimer A-B: Nigroviriditoxin possesses phospholipase A2 (PLA2) activity. It consists of a non-covalent association of a basic PLA2 subunit B with a non-enzymatic subunit A. Subunit A: The acidic subunit of nigroviriditoxin probably is a heterotrimer of three disulfide-linked chains generated by post-translational maturation of a PLA2-like precursor. It appears to have no PLA2 activity of its own, instead inhibiting the catalytic activity of subunit B. It is not toxic to mice by itself but increases toxicity of subunit B. The sequence is that of Phospholipase A2 homolog nigroviriditoxin acidic subunit A from Bothriechis nigroviridis (Black-speckled palm pit viper).